Here is a 155-residue protein sequence, read N- to C-terminus: Small ribosomal subunit protein uS7 (155 aa).

This sequence belongs to the universal ribosomal protein uS7 family. In terms of assembly, part of the 30S ribosomal subunit. Contacts proteins S9 and S11.

In terms of biological role, one of the primary rRNA binding proteins, it binds directly to 16S rRNA where it nucleates assembly of the head domain of the 30S subunit. Is located at the subunit interface close to the decoding center, probably blocks exit of the E-site tRNA. The polypeptide is Small ribosomal subunit protein uS7 (Mycoplasma pneumoniae (strain ATCC 29342 / M129 / Subtype 1) (Mycoplasmoides pneumoniae)).